Here is a 513-residue protein sequence, read N- to C-terminus: Varicidin biosynthesis cluster-specific transcription factor (513 aa).

A DNA-binding region (zn(2)-C6 fungal-type) is located at residues 16–54; the sequence is CERCRLHKLKCTILPQKRFEGPQEAPEQCTRCARAKAKC. Disordered regions lie at residues 58 to 92 and 97 to 116; these read RRAP…MQPN and VSSH…SSLK. Residues 67–76 are compositionally biased toward low complexity; it reads SSSNDRSSVS. The span at 77-92 shows a compositional bias: polar residues; the sequence is KGINSTTPATRTMQPN.

The protein localises to the nucleus. Its function is as follows. Transcription factor that regulates the expression of the gene cluster that mediates the biosynthesis of varicidin A, an antifungal natural product containing a cis-octahydrodecalin core. This is Varicidin biosynthesis cluster-specific transcription factor from Talaromyces variabilis (Penicillium variabile).